The sequence spans 103 residues: Small ribosomal subunit protein uS10 (103 aa).

It belongs to the universal ribosomal protein uS10 family. In terms of assembly, part of the 30S ribosomal subunit.

Functionally, involved in the binding of tRNA to the ribosomes. The chain is Small ribosomal subunit protein uS10 from Psychromonas ingrahamii (strain DSM 17664 / CCUG 51855 / 37).